Here is a 361-residue protein sequence, read N- to C-terminus: Putative F-box protein At3g18340 (361 aa).

The F-box domain maps to 1–46; it reads MASGKLPWELEEEILCRLPPGSLVRLRSVCKHWNDLYNDKWFIKKS.

The chain is Putative F-box protein At3g18340 from Arabidopsis thaliana (Mouse-ear cress).